The following is an 879-amino-acid chain: Alanine--tRNA ligase (879 aa).

The Zn(2+) site is built by His-566, His-570, Cys-668, and His-672.

Belongs to the class-II aminoacyl-tRNA synthetase family. It depends on Zn(2+) as a cofactor.

The protein resides in the cytoplasm. The catalysed reaction is tRNA(Ala) + L-alanine + ATP = L-alanyl-tRNA(Ala) + AMP + diphosphate. In terms of biological role, catalyzes the attachment of alanine to tRNA(Ala) in a two-step reaction: alanine is first activated by ATP to form Ala-AMP and then transferred to the acceptor end of tRNA(Ala). Also edits incorrectly charged Ser-tRNA(Ala) and Gly-tRNA(Ala) via its editing domain. The chain is Alanine--tRNA ligase from Clostridium perfringens (strain 13 / Type A).